Here is a 289-residue protein sequence, read N- to C-terminus: Thioredoxin-like protein 1 (289 aa).

The Thioredoxin domain occupies 2–109 (VGVKPVGSDP…EEKIKQHLEN (108 aa)). A disulfide bond links C34 and C37. S113 bears the Phosphoserine mark. The PITH domain maps to 115-285 (EDTDIPKGYM…NDFKRVVGKK (171 aa)).

Component of the 19S regulatory cap of the 26S proteasome. Interacts with PSMD14/RPN11. Interacts with, and reduces EEF1A1.

It is found in the cytoplasm. It localises to the nucleus. In terms of biological role, active thioredoxin with a redox potential of about -250 mV. This chain is Thioredoxin-like protein 1 (Txnl1), found in Rattus norvegicus (Rat).